Consider the following 529-residue polypeptide: Chromosomal replication initiator protein DnaA (529 aa).

A domain I, interacts with DnaA modulators region spans residues 1-72 (MQDFWHAASA…SLACDYWEAT (72 aa)). The interval 72–192 (TVDVQFVLDP…HVDDSVHERS (121 aa)) is domain II. The interval 193 to 409 (RLNQILTFDN…GALRKILAYS (217 aa)) is domain III, AAA+ region. ATP-binding residues include Gly-237, Gly-239, Lys-240, and Thr-241. Residues 410 to 529 (NFHGKEITIE…LHVLEQTLKG (120 aa)) form a domain IV, binds dsDNA region.

Belongs to the DnaA family. Oligomerizes as a right-handed, spiral filament on DNA at oriC.

It localises to the cytoplasm. Its function is as follows. Plays an essential role in the initiation and regulation of chromosomal replication. ATP-DnaA binds to the origin of replication (oriC) to initiate formation of the DNA replication initiation complex once per cell cycle. Binds the DnaA box (a 9 base pair repeat at the origin) and separates the double-stranded (ds)DNA. Forms a right-handed helical filament on oriC DNA; dsDNA binds to the exterior of the filament while single-stranded (ss)DNA is stabiized in the filament's interior. The ATP-DnaA-oriC complex binds and stabilizes one strand of the AT-rich DNA unwinding element (DUE), permitting loading of DNA polymerase. After initiation quickly degrades to an ADP-DnaA complex that is not apt for DNA replication. Binds acidic phospholipids. The polypeptide is Chromosomal replication initiator protein DnaA (Ralstonia pickettii (strain 12J)).